Reading from the N-terminus, the 147-residue chain is Hemoglobin subunit beta (147 aa).

Residues 3-147 (EWTDFERATI…VVSSLGRQYH (145 aa)) enclose the Globin domain. Residues His-64 and His-93 each coordinate heme b.

The protein belongs to the globin family. In terms of assembly, hb 1 is a heterotetramer of two alpha-1 and two beta chains. Hb 2 is a heterotetramer of two alpha-2 and two beta chains. Red blood cells.

Involved in oxygen transport from gills to the various peripheral tissues. This Cottoperca gobio (Frogmouth) protein is Hemoglobin subunit beta (hbb).